The following is a 241-amino-acid chain: Outer membrane protein A (241 aa).

Transmembrane regions (beta stranded) follow at residues 1 to 8, 13 to 21, 46 to 55, 60 to 67, and 86 to 94; these read LTAKLSYP, LDIYTRLGG, PVFAGGVEYA, IATRLEYQ, and MLSVGVSYR. Repeat copies occupy residues 105-106, 107-108, 109-110, and 111-112. Residues 105–112 form a 4 X 2 AA tandem repeats of A-P region; the sequence is APAPAPAP. The 128-residue stretch at 114 to 241 folds into the OmpA-like domain; the sequence is VQTKHFTLKS…RRVEIEVKGV (128 aa). C215 and C227 are joined by a disulfide.

The protein belongs to the outer membrane OOP (TC 1.B.6) superfamily. OmpA family. Monomer and homodimer.

It is found in the cell outer membrane. In terms of biological role, with TolR probably plays a role in maintaining the position of the peptidoglycan cell wall in the periplasm. Acts as a porin with low permeability that allows slow penetration of small solutes; an internal gate slows down solute passage. The polypeptide is Outer membrane protein A (Shimwellia blattae (Escherichia blattae)).